The primary structure comprises 81 residues: Exodeoxyribonuclease 7 small subunit (81 aa).

Belongs to the XseB family. In terms of assembly, heterooligomer composed of large and small subunits.

The protein resides in the cytoplasm. The enzyme catalyses Exonucleolytic cleavage in either 5'- to 3'- or 3'- to 5'-direction to yield nucleoside 5'-phosphates.. Functionally, bidirectionally degrades single-stranded DNA into large acid-insoluble oligonucleotides, which are then degraded further into small acid-soluble oligonucleotides. The chain is Exodeoxyribonuclease 7 small subunit from Paramagnetospirillum magneticum (strain ATCC 700264 / AMB-1) (Magnetospirillum magneticum).